The chain runs to 363 residues: Flagellar P-ring protein (363 aa).

Residues 1 to 20 (MKKFTLLLLCFVLPMTSAYA) form the signal peptide.

It belongs to the FlgI family. As to quaternary structure, the basal body constitutes a major portion of the flagellar organelle and consists of four rings (L,P,S, and M) mounted on a central rod.

It localises to the periplasm. The protein resides in the bacterial flagellum basal body. In terms of biological role, assembles around the rod to form the L-ring and probably protects the motor/basal body from shearing forces during rotation. This is Flagellar P-ring protein from Vibrio vulnificus (strain YJ016).